Reading from the N-terminus, the 528-residue chain is Autophagy-related protein 22 (528 aa).

The Cytoplasmic portion of the chain corresponds to 1–98 (MSYGTINDMN…IFVDTSSFAL (98 aa)). Residues 99 to 119 (YVFSLSVLFQTIIVISVSGIV) traverse the membrane as a helical segment. Residues 120–130 (DLWGSVKFKGR) lie on the Vacuolar side of the membrane. A helical membrane pass occupies residues 131–151 (ILVWFGIVGALSTVAISKLND). The Cytoplasmic portion of the chain corresponds to 152–153 (TQ). A helical transmembrane segment spans residues 154-174 (IYSLAGLYIVANGCFGVINVV). Topologically, residues 175–210 (GNSLLPIFVKDSLKCQSQGAYEPDKVDSLTTVISGR) are vacuolar. A helical membrane pass occupies residues 211-231 (GASLGYSSALIVQIVSMFLVA). At 232-241 (SKKGSKQDVQ) the chain is on the cytoplasmic side. The chain crosses the membrane as a helical span at residues 242-262 (VAVLFVGIWWFVWQLPMIWLI). Residues 263-318 (DDVTIPIRVDDSTLASARSPYPGEQDALGQLNWKNYLSYGWVSLFESFKHARLLKD) are Vacuolar-facing. Residue Ser278 is modified to Phosphoserine. The chain crosses the membrane as a helical span at residues 319 to 339 (VMIFLIAWFIISDSITTINST). The Cytoplasmic segment spans residues 340-352 (AVLFSKAELHMST). A helical membrane pass occupies residues 353-373 (LNLIMISVLTVVNAMLGAFMI). Topologically, residues 374–388 (PQFLATKFRWTSSQT) are vacuolar. The chain crosses the membrane as a helical span at residues 389–409 (LMYIIIWASFIPFYGILGFFF). Over 410–417 (NAFGLKHK) the chain is Cytoplasmic. A helical membrane pass occupies residues 418–438 (FEMFLLAIWYGLSLGGLSAVS). Residues 439-485 (RSVFSLIVPPGKESTFFSMFSITDKGSSILGPFLVGLLTDKTHNIRY) lie on the Vacuolar side of the membrane. Residues 486-506 (SFYFFFLLLMLSLPVLNCLDV) traverse the membrane as a helical segment. Topologically, residues 507 to 528 (KRGRREAEELSQVLPESERRLD) are cytoplasmic.

This sequence belongs to the ATG22 family.

It is found in the vacuole membrane. Functionally, vacuolar effluxer which mediate the efflux of leucine and other amino acids resulting from autophagic degradation. The release of autophagic amino acids allows the maintenance of protein synthesis and viability during nitrogen starvation. In Saccharomyces cerevisiae (strain ATCC 204508 / S288c) (Baker's yeast), this protein is Autophagy-related protein 22 (ATG22).